The primary structure comprises 547 residues: CTP synthase (547 aa).

Residues methionine 1–isoleucine 265 are amidoligase domain. Position 13 (serine 13) interacts with CTP. Serine 13 serves as a coordination point for UTP. ATP-binding positions include serine 14 to leucine 19 and aspartate 71. Mg(2+) is bound by residues aspartate 71 and glutamate 139. CTP-binding positions include aspartate 146–glutamate 148, lysine 186–glutamine 191, and lysine 222. UTP is bound by residues lysine 186 to glutamine 191 and lysine 222. The Glutamine amidotransferase type-1 domain maps to arginine 291–leucine 546. L-glutamine is bound at residue glycine 352. Cysteine 379 (nucleophile; for glutamine hydrolysis) is an active-site residue. L-glutamine contacts are provided by residues leucine 380–glutamine 383, glutamate 403, and arginine 474. Catalysis depends on residues histidine 519 and glutamate 521.

It belongs to the CTP synthase family. In terms of assembly, homotetramer.

The enzyme catalyses UTP + L-glutamine + ATP + H2O = CTP + L-glutamate + ADP + phosphate + 2 H(+). It catalyses the reaction L-glutamine + H2O = L-glutamate + NH4(+). The catalysed reaction is UTP + NH4(+) + ATP = CTP + ADP + phosphate + 2 H(+). The protein operates within pyrimidine metabolism; CTP biosynthesis via de novo pathway; CTP from UDP: step 2/2. Allosterically activated by GTP, when glutamine is the substrate; GTP has no effect on the reaction when ammonia is the substrate. The allosteric effector GTP functions by stabilizing the protein conformation that binds the tetrahedral intermediate(s) formed during glutamine hydrolysis. Inhibited by the product CTP, via allosteric rather than competitive inhibition. Functionally, catalyzes the ATP-dependent amination of UTP to CTP with either L-glutamine or ammonia as the source of nitrogen. Regulates intracellular CTP levels through interactions with the four ribonucleotide triphosphates. This Paracoccus denitrificans (strain Pd 1222) protein is CTP synthase.